A 242-amino-acid polypeptide reads, in one-letter code: MIILPAIDLKEGKCIRLYQGDFKASKVVAEDPIEVALKFKENGAEYIHIVDLDGALTGEIKNLSIISSIIKTINIPVELGGGIRNLNTIDMLIGAGIERIILGTAALNNRGLVEEAVKKYDEKIAIGIDAKNEKVAINGWLNVSSINYIDFAKEMEKIGVRNIIFTDISKDGTLKGPNLKQLEKLNESISCNVIASGGIKDIEDLKVIKEMDVYGAIVGKAIYSGNINLNEAIKIINKGSSK.

Aspartate 8 acts as the Proton acceptor in catalysis. Aspartate 129 (proton donor) is an active-site residue.

It belongs to the HisA/HisF family.

It localises to the cytoplasm. It carries out the reaction 1-(5-phospho-beta-D-ribosyl)-5-[(5-phospho-beta-D-ribosylamino)methylideneamino]imidazole-4-carboxamide = 5-[(5-phospho-1-deoxy-D-ribulos-1-ylimino)methylamino]-1-(5-phospho-beta-D-ribosyl)imidazole-4-carboxamide. The protein operates within amino-acid biosynthesis; L-histidine biosynthesis; L-histidine from 5-phospho-alpha-D-ribose 1-diphosphate: step 4/9. The chain is 1-(5-phosphoribosyl)-5-[(5-phosphoribosylamino)methylideneamino] imidazole-4-carboxamide isomerase from Clostridium botulinum (strain Kyoto / Type A2).